Reading from the N-terminus, the 148-residue chain is Large ribosomal subunit protein uL15A (148 aa).

Composition is skewed to basic residues over residues 1-13 (MPTH…KLRG) and 21-31 (RIGKHRKHPGG). The interval 1-36 (MPTHVSKTRKLRGHVSAGHGRIGKHRKHPGGRGKAG) is disordered.

This sequence belongs to the universal ribosomal protein uL15 family. Component of the large ribosomal subunit (LSU). Mature yeast ribosomes consist of a small (40S) and a large (60S) subunit. The 40S small subunit contains 1 molecule of ribosomal RNA (18S rRNA) and at least 33 different proteins. The large 60S subunit contains 3 rRNA molecules (25S, 5.8S and 5S rRNA) and at least 46 different proteins.

The protein localises to the cytoplasm. In terms of biological role, component of the ribosome, a large ribonucleoprotein complex responsible for the synthesis of proteins in the cell. The small ribosomal subunit (SSU) binds messenger RNAs (mRNAs) and translates the encoded message by selecting cognate aminoacyl-transfer RNA (tRNA) molecules. The large subunit (LSU) contains the ribosomal catalytic site termed the peptidyl transferase center (PTC), which catalyzes the formation of peptide bonds, thereby polymerizing the amino acids delivered by tRNAs into a polypeptide chain. The nascent polypeptides leave the ribosome through a tunnel in the LSU and interact with protein factors that function in enzymatic processing, targeting, and the membrane insertion of nascent chains at the exit of the ribosomal tunnel. The protein is Large ribosomal subunit protein uL15A (rpl2802) of Schizosaccharomyces pombe (strain 972 / ATCC 24843) (Fission yeast).